A 357-amino-acid chain; its full sequence is bZIP transcription factor 23 (357 aa).

The segment at 166-185 is disordered; the sequence is PPVPPAPTPTAAAVPPPPPP. The bZIP domain maps to 275–338; it reads VERRQRRMIK…KNEVLERMSR (64 aa). Residues 277–296 form a basic motif region; that stretch reads RRQRRMIKNRESAARSRQRK. The segment at 303–317 is leucine-zipper; it reads LEAEVAKLKELNDEL.

Belongs to the bZIP family. ABI5 subfamily. Highly expressed in leaves.

Its subcellular location is the nucleus. Transcriptional activator that mediates abscisic acid (ABA) signaling. Can regulate the expression of a wide spectrum of stress-related genes in response to abiotic stresses through an ABA-dependent regulation pathway. Confers ABA-dependent drought and salinity tolerance. Binds specifically to the ABA-responsive elements (ABRE) in the promoter of target genes to mediate stress-responsive ABA signaling. This chain is bZIP transcription factor 23, found in Oryza sativa subsp. japonica (Rice).